Reading from the N-terminus, the 530-residue chain is Ubiquitin carboxyl-terminal hydrolase 17-like protein 20 (530 aa).

Residues 80-375 (AGLQNMGNTC…QAYVLFYIQK (296 aa)) form the USP domain. The active-site Nucleophile is the Cys89. His334 acts as the Proton acceptor in catalysis. 2 stretches are compositionally biased toward basic and acidic residues: residues 382–392 (SESVSRGREPR) and 398–413 (DTDR…RDHP). 2 disordered regions span residues 382–413 (SESV…RDHP) and 509–530 (RGRA…LVCQ). Positions 510–524 (GRARRSKGKNKHSKR) are enriched in basic residues.

The protein belongs to the peptidase C19 family. USP17 subfamily.

It localises to the nucleus. The protein localises to the endoplasmic reticulum. The catalysed reaction is Thiol-dependent hydrolysis of ester, thioester, amide, peptide and isopeptide bonds formed by the C-terminal Gly of ubiquitin (a 76-residue protein attached to proteins as an intracellular targeting signal).. Deubiquitinating enzyme that removes conjugated ubiquitin from specific proteins to regulate different cellular processes that may include cell proliferation, progression through the cell cycle, apoptosis, cell migration, and the cellular response to viral infection. In Homo sapiens (Human), this protein is Ubiquitin carboxyl-terminal hydrolase 17-like protein 20 (USP17L20).